A 206-amino-acid chain; its full sequence is Dual specificity phosphatase 29 (206 aa).

The Tyrosine-protein phosphatase domain maps to 47 to 194 (HVNQVWPSVY…LRALDITLQE (148 aa)). Substrate is bound at residue 138–145 (HCVMGRSR). The active-site Phosphocysteine intermediate is cysteine 139.

It belongs to the protein-tyrosine phosphatase family. Non-receptor class dual specificity subfamily.

The protein resides in the cytoplasm. It is found in the nucleus. The catalysed reaction is O-phospho-L-tyrosyl-[protein] + H2O = L-tyrosyl-[protein] + phosphate. It carries out the reaction O-phospho-L-seryl-[protein] + H2O = L-seryl-[protein] + phosphate. It catalyses the reaction O-phospho-L-threonyl-[protein] + H2O = L-threonyl-[protein] + phosphate. Dual specificity phosphatase able to dephosphorylate phosphotyrosine, phosphoserine and phosphothreonine residues within the same substrate, with a preference for phosphotyrosine as a substrate. Involved in the modulation of AMPK and MAPK1/2 signaling pathways. This is Dual specificity phosphatase 29 (dusp29) from Gasterosteus aculeatus (Three-spined stickleback).